We begin with the raw amino-acid sequence, 228 residues long: uncharacterized protein (228 aa).

The disordered stretch occupies residues 1 to 34 (MPRDTKPYSRPANAPRPGVKTERSNQFKAASTKY).

This is an uncharacterized protein from Orgyia pseudotsugata (Douglas-fir tussock moth).